The primary structure comprises 330 residues: Interleukin-12 subunit beta (330 aa).

The signal sequence occupies residues 1–22; it reads MHPQQLVVSWFSLVLLASPIMA. Residues 23–106 form the Ig-like C2-type domain; the sequence is IWELEKNVYV…LSHSLLLLHK (84 aa). A disulfide bond links C50 and C90. N-linked (GlcNAc...) asparagine glycosylation is found at N136 and N224. A Fibronectin type-III domain is found at 239 to 330; sequence PPKNLQLKPL…WSEWASVSCS (92 aa).

Belongs to the IL-12B family. In terms of assembly, heterodimer with IL12A; disulfide-linked. The heterodimer is known as interleukin IL-12. Heterodimer with IL23A; disulfide-linked. The heterodimer is known as interleukin IL-23. Also secreted as a monomer. Interacts with NBR1; this interaction promotes IL-12 secretion.

It localises to the secreted. Functionally, cytokine that can act as a growth factor for activated T and NK cells, enhance the lytic activity of NK/lymphokine-activated killer cells, and stimulate the production of IFN-gamma by resting PBMC. Its function is as follows. Associates with IL23A to form the IL-23 interleukin, a heterodimeric cytokine which functions in innate and adaptive immunity. IL-23 may constitute with IL-17 an acute response to infection in peripheral tissues. IL-23 binds to a heterodimeric receptor complex composed of IL12RB1 and IL23R, activates the Jak-Stat signaling cascade, stimulates memory rather than naive T-cells and promotes production of pro-inflammatory cytokines. IL-23 induces autoimmune inflammation and thus may be responsible for autoimmune inflammatory diseases and may be important for tumorigenesis. This Lama glama (Llama) protein is Interleukin-12 subunit beta (IL12B).